The following is a 631-amino-acid chain: Glutamyl-tRNA(Gln) amidotransferase subunit E (631 aa).

This sequence belongs to the GatB/GatE family. GatE subfamily. In terms of assembly, heterodimer of GatD and GatE.

It catalyses the reaction L-glutamyl-tRNA(Gln) + L-glutamine + ATP + H2O = L-glutaminyl-tRNA(Gln) + L-glutamate + ADP + phosphate + H(+). Functionally, allows the formation of correctly charged Gln-tRNA(Gln) through the transamidation of misacylated Glu-tRNA(Gln) in organisms which lack glutaminyl-tRNA synthetase. The reaction takes place in the presence of glutamine and ATP through an activated gamma-phospho-Glu-tRNA(Gln). The GatDE system is specific for glutamate and does not act on aspartate. In Methanococcus maripaludis (strain DSM 14266 / JCM 13030 / NBRC 101832 / S2 / LL), this protein is Glutamyl-tRNA(Gln) amidotransferase subunit E.